The following is a 272-amino-acid chain: Glutamate racemase (272 aa).

Residues 9–10 (DS) and 41–42 (YG) contribute to the substrate site. Cysteine 73 (proton donor/acceptor) is an active-site residue. 74 to 75 (NT) provides a ligand contact to substrate. The active-site Proton donor/acceptor is cysteine 183. 184 to 185 (TH) contacts substrate.

This sequence belongs to the aspartate/glutamate racemases family.

The enzyme catalyses L-glutamate = D-glutamate. The protein operates within cell wall biogenesis; peptidoglycan biosynthesis. Provides the (R)-glutamate required for cell wall biosynthesis. This Shewanella sp. (strain MR-4) protein is Glutamate racemase.